Reading from the N-terminus, the 110-residue chain is Large ribosomal subunit protein uL24 (110 aa).

Belongs to the universal ribosomal protein uL24 family. In terms of assembly, part of the 50S ribosomal subunit.

Its function is as follows. One of two assembly initiator proteins, it binds directly to the 5'-end of the 23S rRNA, where it nucleates assembly of the 50S subunit. Functionally, one of the proteins that surrounds the polypeptide exit tunnel on the outside of the subunit. The sequence is that of Large ribosomal subunit protein uL24 from Ureaplasma parvum serovar 3 (strain ATCC 27815 / 27 / NCTC 11736).